A 559-amino-acid polypeptide reads, in one-letter code: T-complex protein 1 subunit gamma (559 aa).

The cysteines at positions 368 and 374 are disulfide-linked. The tract at residues 531 to 559 (KDKRGGAGQRGGDRGQGDQEETFGDQRDG) is disordered.

Belongs to the TCP-1 chaperonin family. As to quaternary structure, heterooligomeric complex of about 850 to 900 kDa that forms two stacked rings, 12 to 16 nm in diameter.

The protein localises to the cytoplasm. Functionally, molecular chaperone; assists the folding of proteins upon ATP hydrolysis. Known to play a role, in vitro, in the folding of actin and tubulin. The polypeptide is T-complex protein 1 subunit gamma (Oxytricha granulifera (Ciliate)).